A 125-amino-acid chain; its full sequence is Ribosome-binding factor A (125 aa).

It belongs to the RbfA family. In terms of assembly, monomer. Binds 30S ribosomal subunits, but not 50S ribosomal subunits or 70S ribosomes.

It is found in the cytoplasm. Functionally, one of several proteins that assist in the late maturation steps of the functional core of the 30S ribosomal subunit. Associates with free 30S ribosomal subunits (but not with 30S subunits that are part of 70S ribosomes or polysomes). Required for efficient processing of 16S rRNA. May interact with the 5'-terminal helix region of 16S rRNA. This Akkermansia muciniphila (strain ATCC BAA-835 / DSM 22959 / JCM 33894 / BCRC 81048 / CCUG 64013 / CIP 107961 / Muc) protein is Ribosome-binding factor A.